The chain runs to 764 residues: Polyribonucleotide nucleotidyltransferase (764 aa).

The Mg(2+) site is built by D555 and D561. The KH domain maps to 621 to 680 (PHITSINIPQNKIGEVIGPKGKTINQITEETGANITIEDDGTVFISAVGGESAREAEEKI). Positions 692 to 761 (GDRFLGTVVK…NRGKISLVLV (70 aa)) constitute an S1 motif domain.

The protein belongs to the polyribonucleotide nucleotidyltransferase family. Requires Mg(2+) as cofactor.

It localises to the cytoplasm. It carries out the reaction RNA(n+1) + phosphate = RNA(n) + a ribonucleoside 5'-diphosphate. Its function is as follows. Involved in mRNA degradation. Catalyzes the phosphorolysis of single-stranded polyribonucleotides processively in the 3'- to 5'-direction. The polypeptide is Polyribonucleotide nucleotidyltransferase (Corynebacterium jeikeium (strain K411)).